A 117-amino-acid polypeptide reads, in one-letter code: Large ribosomal subunit protein uL18 (117 aa).

Belongs to the universal ribosomal protein uL18 family. Part of the 50S ribosomal subunit; part of the 5S rRNA/L5/L18/L25 subcomplex. Contacts the 5S and 23S rRNAs.

Its function is as follows. This is one of the proteins that bind and probably mediate the attachment of the 5S RNA into the large ribosomal subunit, where it forms part of the central protuberance. This is Large ribosomal subunit protein uL18 from Nitrosococcus oceani (strain ATCC 19707 / BCRC 17464 / JCM 30415 / NCIMB 11848 / C-107).